Reading from the N-terminus, the 216-residue chain is Adenylate kinase (216 aa).

10 to 15 is an ATP binding site; it reads GAGKGT. The NMP stretch occupies residues 30-59; it reads STGDIFRKNISENTPLGIEAKSYMDNGQLV. Residues T31, R36, 57-59, 85-88, and Q92 each bind AMP; these read QLV and GFPR. An LID region spans residues 126–163; that stretch reads GRRVCPSCGASYHIKFNPPTNDGKCDLCGSDVIQRKDD. R127 contacts ATP. Zn(2+)-binding residues include C130 and C133. 136-137 serves as a coordination point for ATP; the sequence is SY. Zn(2+) contacts are provided by C150 and C153. AMP contacts are provided by R160 and R171. Residue Q199 participates in ATP binding.

Belongs to the adenylate kinase family. Monomer.

It is found in the cytoplasm. The catalysed reaction is AMP + ATP = 2 ADP. It participates in purine metabolism; AMP biosynthesis via salvage pathway; AMP from ADP: step 1/1. Its function is as follows. Catalyzes the reversible transfer of the terminal phosphate group between ATP and AMP. Plays an important role in cellular energy homeostasis and in adenine nucleotide metabolism. This is Adenylate kinase from Clostridium perfringens (strain ATCC 13124 / DSM 756 / JCM 1290 / NCIMB 6125 / NCTC 8237 / Type A).